The chain runs to 232 residues: Phosphatidylserine decarboxylase proenzyme (232 aa).

Ser190 serves as the catalytic Schiff-base intermediate with substrate; via pyruvic acid. Ser190 carries the post-translational modification Pyruvic acid (Ser); by autocatalysis.

This sequence belongs to the phosphatidylserine decarboxylase family. PSD-A subfamily. As to quaternary structure, heterodimer of a large membrane-associated beta subunit and a small pyruvoyl-containing alpha subunit. Pyruvate is required as a cofactor. Is synthesized initially as an inactive proenzyme. Formation of the active enzyme involves a self-maturation process in which the active site pyruvoyl group is generated from an internal serine residue via an autocatalytic post-translational modification. Two non-identical subunits are generated from the proenzyme in this reaction, and the pyruvate is formed at the N-terminus of the alpha chain, which is derived from the carboxyl end of the proenzyme. The post-translation cleavage follows an unusual pathway, termed non-hydrolytic serinolysis, in which the side chain hydroxyl group of the serine supplies its oxygen atom to form the C-terminus of the beta chain, while the remainder of the serine residue undergoes an oxidative deamination to produce ammonia and the pyruvoyl prosthetic group on the alpha chain.

The protein resides in the cell membrane. It catalyses the reaction a 1,2-diacyl-sn-glycero-3-phospho-L-serine + H(+) = a 1,2-diacyl-sn-glycero-3-phosphoethanolamine + CO2. It participates in phospholipid metabolism; phosphatidylethanolamine biosynthesis; phosphatidylethanolamine from CDP-diacylglycerol: step 2/2. Its function is as follows. Catalyzes the formation of phosphatidylethanolamine (PtdEtn) from phosphatidylserine (PtdSer). The protein is Phosphatidylserine decarboxylase proenzyme of Rhodopseudomonas palustris (strain BisB18).